The chain runs to 366 residues: Major outer membrane protein (366 aa).

The signal sequence occupies residues 1–21 (MKKTLLATAIAGAMAASGAQA).

Belongs to the Gram-negative porin family. Homotrimer.

Its subcellular location is the cell outer membrane. In Halomonas elongata (strain ATCC 33173 / DSM 2581 / NBRC 15536 / NCIMB 2198 / 1H9), this protein is Major outer membrane protein.